A 252-amino-acid polypeptide reads, in one-letter code: Coenzyme F420:L-glutamate ligase (252 aa).

Residues 12 to 15 (VPLE), 44 to 45 (HT), and Lys49 contribute to the GTP site. Residue Asp114 participates in a divalent metal cation binding. Asn117 is a GTP binding site. A divalent metal cation-binding residues include Asp155, Thr156, and Gln213. GTP is bound at residue 211 to 218 (MGQADEGT).

The protein belongs to the CofE family. As to quaternary structure, homodimer. Requires Mg(2+) as cofactor. The cofactor is Mn(2+). It depends on K(+) as a cofactor.

It carries out the reaction oxidized coenzyme F420-0 + GTP + L-glutamate = oxidized coenzyme F420-1 + GDP + phosphate + H(+). It catalyses the reaction oxidized coenzyme F420-1 + GTP + L-glutamate = oxidized coenzyme F420-2 + GDP + phosphate + H(+). It participates in cofactor biosynthesis; coenzyme F420 biosynthesis. Catalyzes the GTP-dependent successive addition of two or more gamma-linked L-glutamates to the L-lactyl phosphodiester of 7,8-didemethyl-8-hydroxy-5-deazariboflavin (F420-0) to form coenzyme F420-0-glutamyl-glutamate (F420-2) or polyglutamated F420 derivatives. The sequence is that of Coenzyme F420:L-glutamate ligase from Methanopyrus kandleri (strain AV19 / DSM 6324 / JCM 9639 / NBRC 100938).